The sequence spans 760 residues: BMP/retinoic acid-inducible neural-specific protein 1 (760 aa).

The signal sequence occupies residues 1 to 16 (MNWRFVELLYFLFVWG). Residues 68-251 (RYKIYREFAR…FVQSALSYIM (184 aa)) form the MACPF domain. N-linked (GlcNAc...) asparagine glycans are attached at residues N156, N433, N443, N553, N599, N630, and N676.

The protein belongs to the BRINP family. In terms of tissue distribution, expressed in brain. Expressed in GABAergic neurons of the pre-frontal cortex. Weakly expressed in embryonic stem (ES) cells and in ES-derived neural stem cells (NSCs).

It localises to the cytoplasm. Its function is as follows. Plays a role in neurogenesis, brain development, and the functioning of GABAergic neurons. May suppress cell cycle progression in postmitotic neurons by inhibiting G1/S transition. The protein is BMP/retinoic acid-inducible neural-specific protein 1 (Brinp1) of Mus musculus (Mouse).